Here is a 156-residue protein sequence, read N- to C-terminus: ATP synthase subunit b (156 aa).

Residues 7 to 29 form a helical membrane-spanning segment; it reads LIAQAISFAILIWFTTKFVWPYL.

The protein belongs to the ATPase B chain family. In terms of assembly, F-type ATPases have 2 components, F(1) - the catalytic core - and F(0) - the membrane proton channel. F(1) has five subunits: alpha(3), beta(3), gamma(1), delta(1), epsilon(1). F(0) has three main subunits: a(1), b(2) and c(10-14). The alpha and beta chains form an alternating ring which encloses part of the gamma chain. F(1) is attached to F(0) by a central stalk formed by the gamma and epsilon chains, while a peripheral stalk is formed by the delta and b chains.

Its subcellular location is the cell inner membrane. In terms of biological role, f(1)F(0) ATP synthase produces ATP from ADP in the presence of a proton or sodium gradient. F-type ATPases consist of two structural domains, F(1) containing the extramembraneous catalytic core and F(0) containing the membrane proton channel, linked together by a central stalk and a peripheral stalk. During catalysis, ATP synthesis in the catalytic domain of F(1) is coupled via a rotary mechanism of the central stalk subunits to proton translocation. Component of the F(0) channel, it forms part of the peripheral stalk, linking F(1) to F(0). The protein is ATP synthase subunit b of Methylobacillus flagellatus (strain ATCC 51484 / DSM 6875 / VKM B-1610 / KT).